We begin with the raw amino-acid sequence, 40 residues long: Alpha-1B-glycoprotein (40 aa).

Residue Asn-23 is glycosylated (N-linked (GlcNAc...) asparagine).

Interacts with CRISP3. In terms of tissue distribution, plasma.

It localises to the secreted. This Sus scrofa (Pig) protein is Alpha-1B-glycoprotein (A1BG).